The primary structure comprises 100 residues: Integration host factor subunit alpha (100 aa).

The disordered stretch occupies residues 54-73 (DLRDKRQRPGRNPKTGEEIP).

It belongs to the bacterial histone-like protein family. Heterodimer of an alpha and a beta chain.

In terms of biological role, this protein is one of the two subunits of integration host factor, a specific DNA-binding protein that functions in genetic recombination as well as in transcriptional and translational control. The protein is Integration host factor subunit alpha of Pseudomonas aeruginosa (strain UCBPP-PA14).